The sequence spans 287 residues: Large ribosomal subunit protein uL5m (287 aa).

The N-terminal 18 residues, 1–18, are a transit peptide targeting the mitochondrion; that stretch reads MLGIRKNIRISVNFLQRR. Residues 80–89 are compositionally biased toward basic and acidic residues; that stretch reads DEHTQKDRLP. A disordered region spans residues 80–109; that stretch reads DEHTQKDRLPRWIGDNPYYKNRPPQKMRGN.

It belongs to the universal ribosomal protein uL5 family. As to quaternary structure, component of the mitochondrial large ribosomal subunit (mt-LSU). Mature yeast 74S mitochondrial ribosomes consist of a small (37S) and a large (54S) subunit. The 37S small subunit contains a 15S ribosomal RNA (15S mt-rRNA) and at least 32 different proteins. The 54S large subunit contains a 21S rRNA (21S mt-rRNA) and at least 45 different proteins. Unlike bacterial L5, uL5m does not bind zinc.

The protein localises to the mitochondrion. Functionally, component of the mitochondrial ribosome (mitoribosome), a dedicated translation machinery responsible for the synthesis of mitochondrial genome-encoded proteins, including at least some of the essential transmembrane subunits of the mitochondrial respiratory chain. The mitoribosomes are attached to the mitochondrial inner membrane and translation products are cotranslationally integrated into the membrane. The chain is Large ribosomal subunit protein uL5m (mrpl7) from Schizosaccharomyces pombe (strain 972 / ATCC 24843) (Fission yeast).